We begin with the raw amino-acid sequence, 269 residues long: Indole-3-glycerol phosphate synthase (269 aa).

It belongs to the TrpC family.

It catalyses the reaction 1-(2-carboxyphenylamino)-1-deoxy-D-ribulose 5-phosphate + H(+) = (1S,2R)-1-C-(indol-3-yl)glycerol 3-phosphate + CO2 + H2O. It functions in the pathway amino-acid biosynthesis; L-tryptophan biosynthesis; L-tryptophan from chorismate: step 4/5. This is Indole-3-glycerol phosphate synthase from Rhodococcus opacus (strain B4).